The following is a 61-amino-acid chain: Metallothionein-1L (61 aa).

The beta stretch occupies residues 1–29 (MDPNCSCATGGSCSCASSCKCKECKCTSC). A divalent metal cation-binding residues include cysteine 5, cysteine 7, cysteine 13, cysteine 15, cysteine 19, cysteine 21, cysteine 24, cysteine 26, cysteine 29, cysteine 33, cysteine 34, cysteine 36, cysteine 37, cysteine 41, cysteine 44, cysteine 48, cysteine 50, cysteine 57, cysteine 59, and cysteine 60. Residues 30–61 (KKSCCSCCPMGCAKCAQGCVCKGASEKCSCCA) form an alpha region.

Belongs to the metallothionein superfamily. Type 1 family. As to quaternary structure, monomer. Expressed in reticulocytes.

In terms of biological role, metallothioneins have a high content of cysteine residues that bind various heavy metals; these proteins are transcriptionally regulated by both heavy metals and glucocorticoids. The polypeptide is Metallothionein-1L (MT1L) (Homo sapiens (Human)).